Reading from the N-terminus, the 557-residue chain is uncharacterized protein (557 aa).

Positions 2–45 form a coiled coil; that stretch reads NEDETSILNKKMEKIEVEMAEFERLGAEREKEAVERIVQEENQN. Disordered regions lie at residues 39–62, 101–127, 356–402, and 536–557; these read VQEE…KSRK, NRTY…RKNF, PSPS…YPSN, and ANAT…YDHI. Polar residues-rich tracts occupy residues 101–110, 358–380, 390–400, and 536–548; these read NRTYYKNSQG, PSFQ…SSNA, DSATYPTSIYP, and ANAT…NLDT.

The protein resides in the cytoplasm. The protein localises to the nucleus. This is an uncharacterized protein from Schizosaccharomyces pombe (strain 972 / ATCC 24843) (Fission yeast).